A 221-amino-acid polypeptide reads, in one-letter code: Urease accessory protein UreG (221 aa).

19-26 is a binding site for GTP; that stretch reads GPVGSGKT.

This sequence belongs to the SIMIBI class G3E GTPase family. UreG subfamily. Homodimer. UreD, UreF and UreG form a complex that acts as a GTP-hydrolysis-dependent molecular chaperone, activating the urease apoprotein by helping to assemble the nickel containing metallocenter of UreC. The UreE protein probably delivers the nickel.

It localises to the cytoplasm. Its function is as follows. Facilitates the functional incorporation of the urease nickel metallocenter. This process requires GTP hydrolysis, probably effectuated by UreG. The polypeptide is Urease accessory protein UreG (Yersinia enterocolitica serotype O:8 / biotype 1B (strain NCTC 13174 / 8081)).